Consider the following 64-residue polypeptide: Large ribosomal subunit protein bL28 (64 aa).

The protein belongs to the bacterial ribosomal protein bL28 family.

This is Large ribosomal subunit protein bL28 (rpmB) from Mycobacterium leprae (strain TN).